The chain runs to 262 residues: MSNLRRAAEALRRSKTVVFFTGAGISADSGIPTFRDKLTGLWAKHDPQRLETADAFRANPTLVWSWYLWRRHQVSQAKPNSAHLSIPQLADAGWDVSVVTQNIDDLHERAGSSPVVHLHGSLMDVKCFGCHRPAELSPDQLAVPLEGQLIEPPRCTRCNGRLRPGVVWFRENLPDNAWRSAVRLVRACDLLVSVGTSGVVMPAAGIPDMALAVGATVIHVNLEDVGMDGADEIMLEGPAGVVLPALLQATGVAALSPPGVPT.

The Deacetylase sirtuin-type domain occupies 1-262; sequence MSNLRRAAEA…AALSPPGVPT (262 aa). 22-42 is an NAD(+) binding site; sequence GAGISADSGIPTFRDKLTGLW. 2 residues coordinate substrate: Y67 and R70. 101–104 is a binding site for NAD(+); sequence QNID. Catalysis depends on H119, which acts as the Proton acceptor. Zn(2+) is bound by residues C127, C130, C155, and C158. NAD(+)-binding positions include 195 to 197, 221 to 223, and A239; these read GTS and NLE.

The protein belongs to the sirtuin family. Class III subfamily. Zn(2+) serves as cofactor.

It localises to the cytoplasm. It carries out the reaction N(6)-acetyl-L-lysyl-[protein] + NAD(+) + H2O = 2''-O-acetyl-ADP-D-ribose + nicotinamide + L-lysyl-[protein]. The catalysed reaction is N(6)-succinyl-L-lysyl-[protein] + NAD(+) + H2O = 2''-O-succinyl-ADP-D-ribose + nicotinamide + L-lysyl-[protein]. NAD-dependent lysine deacetylase and desuccinylase that specifically removes acetyl and succinyl groups on target proteins. Modulates the activities of several proteins which are inactive in their acylated form. The chain is NAD-dependent protein deacylase from Pseudomonas putida (strain ATCC 47054 / DSM 6125 / CFBP 8728 / NCIMB 11950 / KT2440).